A 428-amino-acid polypeptide reads, in one-letter code: MSMLSRRLFSTSRLAAFSKIKVKQPVVELDGDEMTRIIWDKIKKKLILPYLDVDLKYYDLSVESRDATSDKITQDAAEAIKKYGVGIKCATITPDEARVKEFNLHKMWKSPNGTIRNILGGTVFREPIVIPRIPRLVPRWEKPIIIGRHAHGDQYKATDTLIPGPGSLELVYKPSDPTTAQPQTLKVYDYKGSGVAMAMYNTDESIEGFAHSSFKLAIDKKLNLFLSTKNTILKKYDGRFKDIFQEVYEAQYKSKFEQLGIHYEHRLIDDMVAQMIKSKGGFIMALKNYDGDVQSDIVAQGFGSLGLMTSILVTPDGKTFESEAAHGTVTRHYRKYQKGEETSTNSIASIFAWSRGLLKRGELDNTPALCKFANILESATLNTVQQDGIMTKDLALACGNNERSAYVTTEEFLDAVEKRLQKEIKSIE.

The transit peptide at Met-1–Ala-16 directs the protein to the mitochondrion. Residues Thr-91–Thr-93 and Arg-98 contribute to the NADP(+) site. A substrate-binding site is contributed by Thr-93. Residues Ser-110–Arg-116, Arg-125, and Arg-148 contribute to the substrate site. Residue Asp-269 participates in Mn(2+) binding. Lys-277 contributes to the NADP(+) binding site. Asp-292 contacts Mn(2+). NADP(+) is bound by residues Gly-327 to His-332 and Asn-345.

It belongs to the isocitrate and isopropylmalate dehydrogenases family. As to quaternary structure, homodimer. Requires Mg(2+) as cofactor. It depends on Mn(2+) as a cofactor.

It is found in the mitochondrion. The catalysed reaction is D-threo-isocitrate + NADP(+) = 2-oxoglutarate + CO2 + NADPH. Its activity is regulated as follows. The enzyme is subject to end product inhibition by NADPH and 2-oxoglutarate. Mitochondrial IDP1 may regulate flux through the tricarboxylic acid cycle and respiration. Its probably critical function is the production of NADPH. The protein is Isocitrate dehydrogenase [NADP], mitochondrial (IDP1) of Saccharomyces cerevisiae (strain ATCC 204508 / S288c) (Baker's yeast).